The chain runs to 384 residues: Actin-binding Rho-activating protein (384 aa).

The segment covering 1–11 (MARGEKGRGEG) has biased composition (basic and acidic residues). 3 disordered regions span residues 1–20 (MARGEKGRGEGPAKSALRKV), 32–159 (GWQQ…SPTR), and 181–211 (EQEELKCRSDSIDTEDSGYGGETEERPEQDG). A compositionally biased stretch (polar residues) spans 35 to 47 (QWANENSTRQAQE). The segment covering 134–145 (DGDEPEPEQPES) has biased composition (acidic residues). Phosphoserine occurs at positions 156 and 191. Actin-binding regions lie at residues 202–302 (ETEE…AERA) and 303–384 (KRAE…TLLK). Interaction with actin stretches follow at residues 243 to 288 (SQVG…GDEG) and 355 to 384 (MRARKHGLVDFEGEMLWQGRDDHVVITLLK).

In terms of assembly, binds F-actin and ABLIM1, ABLIM2 and ABLIM3. Interaction with ABLIM2 and ABLIM3 enhances activity. As to expression, specifically expressed in heart and skeletal muscles.

The protein resides in the cytoplasm. It is found in the myofibril. Its subcellular location is the sarcomere. The protein localises to the cytoskeleton. In terms of biological role, acts as an activator of serum response factor (SRF)-dependent transcription possibly by inducing nuclear translocation of MKL1 or MKL2 and through a mechanism requiring Rho-actin signaling. The sequence is that of Actin-binding Rho-activating protein (ABRA) from Sus scrofa (Pig).